The following is a 131-amino-acid chain: Putative protein PTGES3L (131 aa).

A CS domain is found at 3-91; sequence RQPARTLWYD…KEKVAWPRLT (89 aa).

It belongs to the p23/wos2 family.

This chain is Putative protein PTGES3L (Ptges3l), found in Mus musculus (Mouse).